We begin with the raw amino-acid sequence, 596 residues long: Probable tripeptidyl-peptidase SED2 (596 aa).

Residues 1–16 (MRLLKFVCLLASVAAA) form the signal peptide. The propeptide at 17–203 (KPTPGASHKV…LESMSVEEFA (187 aa)) is removed in mature form. The 387-residue stretch at 210–596 (LVTTACLREL…NFQALTKVLP (387 aa)) folds into the Peptidase S53 domain. The N-linked (GlcNAc...) asparagine glycan is linked to Asn265. Catalysis depends on charge relay system residues Glu286 and Asp290. An N-linked (GlcNAc...) asparagine glycan is attached at Asn403. Ser501 serves as the catalytic Charge relay system. The Ca(2+) site is built by Asp543 and Ile544. N-linked (GlcNAc...) asparagine glycosylation occurs at Asn572. Ca(2+) is bound by residues Gly576 and Asp578.

Ca(2+) serves as cofactor.

The protein localises to the secreted. It is found in the extracellular space. It carries out the reaction Release of an N-terminal tripeptide from a polypeptide.. In terms of biological role, secreted tripeptidyl-peptidase which degrades proteins at acidic pHs and is involved in virulence. This Trichophyton verrucosum (strain HKI 0517) protein is Probable tripeptidyl-peptidase SED2 (SED2).